The chain runs to 271 residues: Arginine and glutamate-rich protein 1 (271 aa).

2 stretches are compositionally biased toward basic residues: residues 1–29 (MGRS…RSRS) and 37–58 (VRKR…RSRS). The tract at residues 1-72 (MGRSRSRSSS…AAASRRERER (72 aa)) is necessary and sufficient for RNA binding. Residues 1-112 (MGRSRSRSSS…EKKAEFERQR (112 aa)) form a disordered region. Phosphoserine is present on residues serine 58 and serine 60. Threonine 61 is modified (phosphothreonine). 2 stretches are compositionally biased toward basic and acidic residues: residues 66–82 (SRRE…RIDI) and 91–112 (SSLD…ERQR). Positions 73–271 (ASSPPDRIDI…KLSFSLKTQD (199 aa)) are necessary and sufficient for transcriptional regulation. Serine 74 and serine 75 each carry phosphoserine. The short motif at 170–174 (LLEEL) is the LXXLL motif 1; degenerate element. An LXXLL motif 2; degenerate motif is present at residues 199–203 (LERIL). The segment covering 236 to 251 (MKLEQERQRQQKEEQK) has biased composition (basic and acidic residues). The disordered stretch occupies residues 236–271 (MKLEQERQRQQKEEQKIILGKGKSRPKLSFSLKTQD). Phosphoserine is present on serine 264.

The protein belongs to the ARGLU1 family. As to quaternary structure, interacts with MED1; the interaction is direct. Interacts with PUF60, U2AF2 and JMJD6; may interact with other proteins involved in RNA processing and splicing. As to expression, high expression levels in the neocortex, hippocampus and thalamus but low expression levels in the midbrain and hindbrain (at protein level). Ubiquitously expressed with highest expression levels in the central nervous system and low expression in uterus and pancreas.

The protein localises to the nucleus. It is found in the nucleus speckle. Its subcellular location is the chromosome. Dual function regulator of gene expression; regulator of transcription and modulator of alternative splicing. General coactivator of nuclear receptor-induced gene expression, including genes activated by the glucocorticoid receptor NR3C1. Binds to a subset of pre-mRNAs and to components of the spliceosome machinery to directly modulate basal alternative splicing; involved in simple and complex cassette exon splicing events. Binds its own pre-mRNA and regulates its alternative splicing and degradation; one of the alternatively spliced products is a stable intronic sequence RNA (sisRNA) that binds the protein to regulate its ability to affect splicing. Binding of the sisRNA stimulates phase separation and localization to nuclear speckles, which may contribute to activation of nuclear receptor-induced gene expression. May also indirectly modulate alternative splicing. Regulates transcription of genes involved in heart development, neuronal cell function, protein localization and chromatin localization. Regulates splicing of genes involved in neurogenesis and chromatin organization. Essential for central nervous system development. Required for the estrogen-dependent expression of ESR1 target genes. Can act in cooperation with MED1. This chain is Arginine and glutamate-rich protein 1 (Arglu1), found in Mus musculus (Mouse).